A 338-amino-acid chain; its full sequence is 4-hydroxy-2-oxovalerate aldolase (338 aa).

The Pyruvate carboxyltransferase domain maps to 4-254 (PRLTDTTLRD…NPGLDVLALM (251 aa)). Position 12-13 (12-13 (RD)) interacts with substrate. Mn(2+) is bound at residue Asp-13. His-16 serves as the catalytic Proton acceptor. Ser-166 and His-193 together coordinate substrate. Mn(2+)-binding residues include His-193 and His-195. Tyr-284 contacts substrate.

This sequence belongs to the 4-hydroxy-2-oxovalerate aldolase family.

It catalyses the reaction (S)-4-hydroxy-2-oxopentanoate = acetaldehyde + pyruvate. The sequence is that of 4-hydroxy-2-oxovalerate aldolase from Roseiflexus sp. (strain RS-1).